Here is a 412-residue protein sequence, read N- to C-terminus: 4-hydroxyphenylpyruvate dioxygenase (412 aa).

2 VOC domains span residues 31 to 179 (GYDH…LISR) and 209 to 369 (RIDH…LFTK). 3 residues coordinate Fe cation: His-212, His-295, and Glu-380.

It belongs to the 4HPPD family. Fe cation serves as cofactor.

The catalysed reaction is 3-(4-hydroxyphenyl)pyruvate + O2 = homogentisate + CO2. Its pathway is amino-acid degradation; L-phenylalanine degradation; acetoacetate and fumarate from L-phenylalanine: step 3/6. The chain is 4-hydroxyphenylpyruvate dioxygenase from Neurospora crassa (strain ATCC 24698 / 74-OR23-1A / CBS 708.71 / DSM 1257 / FGSC 987).